We begin with the raw amino-acid sequence, 199 residues long: Proteasome subunit beta type-2 (199 aa).

The protein belongs to the peptidase T1B family. The 26S proteasome consists of a 20S proteasome core and two 19S regulatory subunits. The 20S proteasome core is composed of 28 subunits that are arranged in four stacked rings, resulting in a barrel-shaped structure. The two end rings are each formed by seven alpha subunits, and the two central rings are each formed by seven beta subunits. The catalytic chamber with the active sites is on the inside of the barrel.

It localises to the cytoplasm. It is found in the nucleus. In terms of biological role, non-catalytic component of the proteasome, a multicatalytic proteinase complex which is characterized by its ability to cleave peptides with Arg, Phe, Tyr, Leu, and Glu adjacent to the leaving group at neutral or slightly basic pH. The proteasome has an ATP-dependent proteolytic activity. This is Proteasome subunit beta type-2 (pbs-4) from Caenorhabditis elegans.